Here is a 232-residue protein sequence, read N- to C-terminus: Phosphoglycolate phosphatase (232 aa).

Aspartate 13 serves as the catalytic Nucleophile. Aspartate 13, aspartate 15, and aspartate 175 together coordinate Mg(2+).

Belongs to the HAD-like hydrolase superfamily. CbbY/CbbZ/Gph/YieH family. Monomer. Mg(2+) serves as cofactor. It depends on chloride as a cofactor.

The enzyme catalyses 2-phosphoglycolate + H2O = glycolate + phosphate. The protein operates within organic acid metabolism; glycolate biosynthesis; glycolate from 2-phosphoglycolate: step 1/1. Specifically catalyzes the dephosphorylation of 2-phosphoglycolate. Is involved in the dissimilation of the intracellular 2-phosphoglycolate formed during the DNA repair of 3'-phosphoglycolate ends, a major class of DNA lesions induced by oxidative stress. The protein is Phosphoglycolate phosphatase of Yersinia pseudotuberculosis serotype I (strain IP32953).